Reading from the N-terminus, the 362-residue chain is Ferrochelatase (362 aa).

Fe cation contacts are provided by His212 and Glu294.

It belongs to the ferrochelatase family.

Its subcellular location is the cytoplasm. The catalysed reaction is heme b + 2 H(+) = protoporphyrin IX + Fe(2+). It functions in the pathway porphyrin-containing compound metabolism; protoheme biosynthesis; protoheme from protoporphyrin-IX: step 1/1. Functionally, catalyzes the ferrous insertion into protoporphyrin IX. The chain is Ferrochelatase from Leptospira biflexa.